Consider the following 202-residue polypeptide: Small ribosomal subunit protein uS4c (202 aa).

Residues 90-153 (MRLDNVIFRL…KSEAIISKNI (64 aa)) enclose the S4 RNA-binding domain.

The protein belongs to the universal ribosomal protein uS4 family. In terms of assembly, part of the 30S ribosomal subunit. Contacts protein S5. The interaction surface between S4 and S5 is involved in control of translational fidelity.

The protein resides in the plastid. Its subcellular location is the chloroplast. One of the primary rRNA binding proteins, it binds directly to 16S rRNA where it nucleates assembly of the body of the 30S subunit. Its function is as follows. With S5 and S12 plays an important role in translational accuracy. The protein is Small ribosomal subunit protein uS4c (rps4) of Hypopterygium didictyon.